The sequence spans 266 residues: Undecaprenyl-diphosphatase (266 aa).

The next 8 helical transmembrane spans lie at 4-24 (WVLAIILGVVEGLTEFIPVSS), 41-61 (GKVFEVMIQLGAILAVISVYF), 80-100 (FVASIVLAFLPAGFAGFLLHD), 105-125 (VLFETPAVICVSLILGGFALL), 139-159 (AGAFPLKTAFIIGLFQCLALI), 182-202 (AAEFSFFLAMPTMAGAFTVDL), 212-232 (DDAGIIALGFVCALVAAIITV), and 245-265 (APFAWWRIAVGALGLLGLAFI).

It belongs to the UppP family.

It localises to the cell inner membrane. The catalysed reaction is di-trans,octa-cis-undecaprenyl diphosphate + H2O = di-trans,octa-cis-undecaprenyl phosphate + phosphate + H(+). Catalyzes the dephosphorylation of undecaprenyl diphosphate (UPP). Confers resistance to bacitracin. The sequence is that of Undecaprenyl-diphosphatase from Phenylobacterium zucineum (strain HLK1).